Here is a 704-residue protein sequence, read N- to C-terminus: Transmembrane protein DDB_G0274347 (704 aa).

The disordered stretch occupies residues 37–145 (VEQRDEVNDE…NNYNNNNTPT (109 aa)). The span at 43–67 (VNDEFQEEEEELEDDDDDEDDEDEI) shows a compositional bias: acidic residues. Basic and acidic residues predominate over residues 85 to 99 (HNDKEKEKKKDKQEE). A compositionally biased stretch (acidic residues) spans 100 to 113 (YIDSDDDDDDDGDE). Low complexity predominate over residues 114 to 142 (NYYLNNNNNNNNNINNNNNYNNNNYNNNN). N-linked (GlcNAc...) asparagine glycosylation occurs at asparagine 166. The chain crosses the membrane as a helical span at residues 255-275 (ALISMALLISLVAIIFYLPLP). Asparagine 354 carries an N-linked (GlcNAc...) asparagine glycan. The next 3 membrane-spanning stretches (helical) occupy residues 370-390 (LKIF…WLFA), 414-434 (TLLV…LYFI), and 513-533 (LVSF…FLIS). Low complexity predominate over residues 550–565 (TTTTTINTTTNTTSNT). The segment at 550-576 (TTTTTINTTTNTTSNTSQQSNPLSKRL) is disordered. Asparagine 556, asparagine 560, and asparagine 564 each carry an N-linked (GlcNAc...) asparagine glycan. Positions 566–576 (SQQSNPLSKRL) are enriched in polar residues. A run of 2 helical transmembrane segments spans residues 609–629 (FIIV…GVPP) and 638–658 (IFFI…LIII).

Its subcellular location is the membrane. In Dictyostelium discoideum (Social amoeba), this protein is Transmembrane protein DDB_G0274347.